The following is a 327-amino-acid chain: Glycolipid sulfotransferase BCG_1434 (327 aa).

40–45 (KSGLTW) contributes to the 3'-phosphoadenylyl sulfate binding site. H97 acts as the Proton acceptor in catalysis. 116 to 124 (RDPRDAAVS) contacts 3'-phosphoadenylyl sulfate.

This sequence belongs to the sulfotransferase 1 family.

Its function is as follows. Involved in the synthesis of cell wall sulfolipids. This chain is Glycolipid sulfotransferase BCG_1434, found in Mycobacterium bovis (strain BCG / Pasteur 1173P2).